Here is a 303-residue protein sequence, read N- to C-terminus: tRNA dimethylallyltransferase 1 (303 aa).

ATP is bound at residue 17–24; that stretch reads GPTACGKT. 19-24 provides a ligand contact to substrate; the sequence is TACGKT. Residues 42–45 form an interaction with substrate tRNA region; that stretch reads DSRQ.

The protein belongs to the IPP transferase family. As to quaternary structure, monomer. Mg(2+) serves as cofactor.

The catalysed reaction is adenosine(37) in tRNA + dimethylallyl diphosphate = N(6)-dimethylallyladenosine(37) in tRNA + diphosphate. In terms of biological role, catalyzes the transfer of a dimethylallyl group onto the adenine at position 37 in tRNAs that read codons beginning with uridine, leading to the formation of N6-(dimethylallyl)adenosine (i(6)A). This is tRNA dimethylallyltransferase 1 from Hahella chejuensis (strain KCTC 2396).